The following is a 661-amino-acid chain: MIWNGRLVLACVLLIAGCSGQVDAARTREQRKAFGSPNIVLPPGPAHEVASAKPARALGEKTFTLRHVYHHGTHNYPNLHRYIDIQPESKLQVSYDDGTTYEEAEVAFKAKAQSRIVQRMAHRSHSDIDAVQVHYFTYGQPADVEWTEDEIAGPNISDKSTVLTFAKMAANAYIFSRKDGEWQPVKGGFNYTDDFGWEQDGLRGHIFADEANSTVVIGLKGTSPAIFDGADTTGNDKLNDNLFGSCCCAQGGPFTWKKVCDCAGSSAYTCNNTCLVKSLREKGHYYWAVKDLYRNVTERYPDSEVWLSGHSLGGVVSSLLGLTYGLPTLTFEAFPDAMAASRLGLPTPPGYKIGSHQARPMTGIHHFGHTADPIYMGSCNGGTSFCSIGGYAFEGVCHTGETCTYDTVRDLGWRVGIGTHKIVSVIKDVIKVYDQPPSCEQDVECVDCYNWKYFENNGTETTTSKASTATSTTTRTRTETCKTPGWWGCLDESTTSAPTTSTSTSSSTSSTRTCETPGWFGCKDETTTTSSSSSISSPSATPAPTITTTSSLPTSTSTSTCKTPGWFGCYDESTTTSATPKPSSTARTVTKTKTTTSDDDDCTSREWFGLICVDPSPTTASGSSPSSTNLPTTRRKMCTKRHWYGTCKQWRFDDFDPKNDL.

Residues 1–3 (MIW) lie on the Cytoplasmic side of the membrane. The helical; Signal-anchor for type II membrane protein transmembrane segment at 4-24 (NGRLVLACVLLIAGCSGQVDA) threads the bilayer. Over 25 to 661 (ARTREQRKAF…FDDFDPKNDL (637 aa)) the chain is Lumenal. Residues Asn-155, Asn-190, Asn-212, Asn-271, and Asn-295 are each glycosylated (N-linked (GlcNAc...) asparagine). Residue Ser-311 is the Charge relay system of the active site. Asn-457 is a glycosylation site (N-linked (GlcNAc...) asparagine). 2 disordered regions span residues 492 to 559 (ESTT…TSTS) and 574 to 597 (TTTS…TTTS). 3 stretches are compositionally biased toward low complexity: residues 493-513 (STTS…STRT), 527-559 (TTTS…TSTS), and 574-595 (TTTS…TKTT).

The protein belongs to the AB hydrolase superfamily. Lipase family. In terms of assembly, binds to both phosphatidylinositol (PI) and phosphatidylinositol 3,5-bisphosphate (PIP2).

The protein localises to the endosome. The protein resides in the multivesicular body membrane. It localises to the prevacuolar compartment membrane. It catalyses the reaction a triacylglycerol + H2O = a diacylglycerol + a fatty acid + H(+). In terms of biological role, lipase which is essential for lysis of subvacuolar cytoplasm to vacuole targeted bodies and intravacuolar autophagic bodies. Involved in the lysis of intravacuolar multivesicular body (MVB) vesicles. The intravacuolar membrane disintegration by ATG15 is critical to life span extension. The sequence is that of Putative lipase ATG15 (ATG15) from Passalora fulva (Tomato leaf mold).